The following is a 511-amino-acid chain: Cytochrome P450 monooxygenase nodR (511 aa).

The chain crosses the membrane as a helical span at residues Ile-8–Ala-28. N-linked (GlcNAc...) asparagine glycosylation is found at Asn-76 and Asn-373. Heme is bound at residue Cys-452.

It belongs to the cytochrome P450 family. Heme serves as cofactor.

It localises to the membrane. Its pathway is secondary metabolite biosynthesis. Functionally, cytochrome P450 monooxygenase; part of the gene cluster that mediates the biosynthesis of the indole diterpenes nodulisporic acids (NA). Nodulisporic acid A (NAA) and its chemically modified derivatives are of particular significance because of their highly potent insecticidal activity against blood-feeding arthropods and lack of observable adverse effects on mammals, in particular the tremogenicity associated with the paspaline-derived IDTs is not observed. The geranylgeranyl diphosphate (GGPP) synthase ggs1, localized outside of the cluster, is proposed to catalyze the first step in nodulisporic acid biosynthesis via conversion of farnesyl pyrophosphate and isopentyl pyrophosphate into geranylgeranyl pyrophosphate (GGPP). Condensation of indole-3-glycerol phosphate with GGPP by the prenyl transferase nodC then forms 3-geranylgeranylindole (3-GGI). Epoxidation by the FAD-dependent monooxygenase nodM leads to a single-epoxidized-GGI that is substrate of the terpene cyclase nodB for cyclization to yield emindole SB. The terminal methyl carbon, C28, of emindole SB is then oxidized by the cytochrome P450 monooxygenase nodW to produce nodulisporic acid F (NAF), the pentacyclic core of NAA. NAF is converted to nodulisporic acid E (NAE) via prenylation. This step is probably performed by one of the indole diterpene prenyltransferases nodD1 or nodD2. Several oxidation steps performed by the FAD-linked oxidoreductase nodO and one of the cytochrome P450 monooxygenase nodR, nodX or nodZ further convert NAE to nodulisporic acid D (NAD). NAD is substrate of cytochrome P450 monooxygenase nodJ to produce the precursor of nodulisporic acid C (NAC), converted to NAC by one of the indole diterpene prenyltransferases nodD1 or nodD2. The FAD-dependent monooxygenase nodY2 then oxidizes NAC to nodulisporic acid B (NAB). Finally NAB is converted to NAA by one of the cytochrome P450 monooxygenases nodR, nodX or nodZ. The protein is Cytochrome P450 monooxygenase nodR of Hypoxylon pulicicidum.